Reading from the N-terminus, the 1099-residue chain is Transmembrane protein 132D (1099 aa).

An N-terminal signal peptide occupies residues methionine 1–glycine 30. Over arginine 31 to aspartate 915 the chain is Extracellular. An N-linked (GlcNAc...) asparagine glycan is attached at asparagine 505. A disordered region spans residues phenylalanine 797 to aspartate 858. Residues glycine 835–glycine 848 show a composition bias toward low complexity. The helical transmembrane segment at leucine 916–isoleucine 936 threads the bilayer. The Cytoplasmic segment spans residues asparagine 937 to valine 1099.

The protein belongs to the TMEM132 family. As to quaternary structure, interacts (via C-terminus) with NCKAP. In terms of tissue distribution, expressed in mature oligodendrocytes. Detected in the brain, lung, pancreas and testis. Highly expressed in mature neurons of the adult nervous system.

Its subcellular location is the membrane. Its function is as follows. Regulate neuronals morphology via inhibition of the WAVE regulatory complex (WCR), a complex that controls F-actin cytoskeletal dynamics. The sequence is that of Transmembrane protein 132D from Homo sapiens (Human).